The chain runs to 132 residues: Small ribosomal subunit protein uS11 (132 aa).

Belongs to the universal ribosomal protein uS11 family. As to quaternary structure, part of the 30S ribosomal subunit. Interacts with proteins S7 and S18. Binds to IF-3.

Located on the platform of the 30S subunit, it bridges several disparate RNA helices of the 16S rRNA. Forms part of the Shine-Dalgarno cleft in the 70S ribosome. This chain is Small ribosomal subunit protein uS11, found in Clostridium botulinum (strain 657 / Type Ba4).